The following is a 320-amino-acid chain: Cytochrome f (320 aa).

Positions 1–35 are cleaved as a signal peptide; it reads MQTRNTFSWIREEITRSISVLLMIYIITWASISSA. Heme is bound by residues Tyr36, Cys56, Cys59, and His60. A helical transmembrane segment spans residues 286 to 306; it reads VQGLLFFLGSVVLAQIFLVLK.

It belongs to the cytochrome f family. The 4 large subunits of the cytochrome b6-f complex are cytochrome b6, subunit IV (17 kDa polypeptide, petD), cytochrome f and the Rieske protein, while the 4 small subunits are PetG, PetL, PetM and PetN. The complex functions as a dimer. The cofactor is heme.

The protein resides in the plastid. Its subcellular location is the chloroplast thylakoid membrane. Its function is as follows. Component of the cytochrome b6-f complex, which mediates electron transfer between photosystem II (PSII) and photosystem I (PSI), cyclic electron flow around PSI, and state transitions. This chain is Cytochrome f, found in Lobularia maritima (Sweet alyssum).